The following is a 522-amino-acid chain: 5,6-dihydroxyindole-2-carboxylic acid oxidase (522 aa).

The signal sequence occupies residues 1–21 (MLRTSCGGMLLLVHALGLVRA). At 22–470 (QFPRACVTPE…RPLTPTQIVT (449 aa)) the chain is on the lumenal, melanosome side. 5 disulfide bridges follow: Cys-27–Cys-38, Cys-39–Cys-59, Cys-50–Cys-89, Cys-91–Cys-100, and Cys-103–Cys-112. N-linked (GlcNAc...) asparagine glycans are attached at residues Asn-164 and Asn-171. Residues His-182, His-205, and His-214 each contribute to the Zn(2+) site. 2 disulfide bridges follow: Cys-248-Cys-251 and Cys-280-Cys-293. Asn-294 is a glycosylation site (N-linked (GlcNAc...) asparagine). 2 residues coordinate Zn(2+): His-367 and His-371. A glycan (N-linked (GlcNAc...) asparagine) is linked at Asn-375. His-394 is a Zn(2+) binding site. A helical transmembrane segment spans residues 471–491 (VAVVAALLLVAIIFAASTCVV). The Cytoplasmic portion of the chain corresponds to 492 to 522 (HLRGNRTEGRQPLLGDQYQRYEDHNKTQSVV).

It belongs to the tyrosinase family. Requires Cu(2+) as cofactor. The cofactor is Zn(2+).

The protein localises to the melanosome membrane. The enzyme catalyses 2 5,6-dihydroxyindole-2-carboxylate + O2 = 2 indole-5,6-quinone-2-carboxylate + 2 H2O. It functions in the pathway pigment biosynthesis; melanin biosynthesis. In terms of biological role, plays a role in melanin biosynthesis. Catalyzes the oxidation of 5,6-dihydroxyindole-2-carboxylic acid (DHICA) into indole-5,6-quinone-2-carboxylic acid. May regulate or influence the type of melanin synthesized. Also to a lower extent, capable of hydroxylating tyrosine and producing melanin. This is 5,6-dihydroxyindole-2-carboxylic acid oxidase (tyrp1) from Carassius auratus (Goldfish).